We begin with the raw amino-acid sequence, 202 residues long: Small ribosomal subunit protein uS4 (202 aa).

Over residues 1–13 (MSRYRGPRLRITR) the composition is skewed to basic residues. The tract at residues 1 to 43 (MSRYRGPRLRITRRLGDLPGLTRKAAKRSHPPGQHGQARRKRS) is disordered. Residues 90–152 (NRLDNVCFRL…KGSKKLAEAN (63 aa)) enclose the S4 RNA-binding domain.

The protein belongs to the universal ribosomal protein uS4 family. Part of the 30S ribosomal subunit. Contacts protein S5. The interaction surface between S4 and S5 is involved in control of translational fidelity.

One of the primary rRNA binding proteins, it binds directly to 16S rRNA where it nucleates assembly of the body of the 30S subunit. Functionally, with S5 and S12 plays an important role in translational accuracy. In Prochlorococcus marinus (strain MIT 9303), this protein is Small ribosomal subunit protein uS4.